A 1142-amino-acid polypeptide reads, in one-letter code: SNF1-activating kinase 1 (1142 aa).

A disordered region spans residues 22 to 41 (ELEKSGTSSSVSLRSPTKSS). A Phosphothreonine modification is found at threonine 43. Residues 82-93 (QHQQHISSSLAK) show a composition bias toward polar residues. The interval 82 to 107 (QHQQHISSSLAKTPTTTSSFCSSGSS) is disordered. Residues 94 to 107 (TPTTTSSFCSSGSS) are compositionally biased toward low complexity. Positions 133–448 (YEIIKELGHG…IPAIKKHPFV (316 aa)) constitute a Protein kinase domain. ATP is bound by residues 139 to 147 (LGHGQHGKV) and lysine 162. The Proton acceptor role is filled by aspartate 277. Disordered regions lie at residues 634 to 678 (SPEA…VLPQ), 694 to 799 (NSLL…NSPI), 825 to 875 (SHFN…AYSE), 919 to 971 (KSSL…QKGS), 1005 to 1027 (SQPI…KATT), and 1066 to 1142 (STNA…SALP). Residues 640–656 (SVSSVPNLPSAPSSTRL) are compositionally biased toward polar residues. Over residues 694 to 706 (NSLLRNSSSHLTS) the composition is skewed to low complexity. The span at 707–741 (YNSGRPSSRTGRMNSRNQNLPKIPNSLSKISTTKL) shows a compositional bias: polar residues. Positions 742–751 (TELRVPKDSE) are enriched in basic and acidic residues. Residues 785–799 (NINSSDKSGSKNSPI) show a composition bias toward polar residues. 2 stretches are compositionally biased toward low complexity: residues 835–868 (SSQS…RNSS) and 920–936 (SSLN…SSSS). The span at 958–971 (SKLSELSNSPQKGS) shows a compositional bias: polar residues. Serine 964 is modified (phosphoserine). Residues 1096–1111 (NDEHARNTSCHGDKGQ) show a composition bias toward basic and acidic residues. Position 1126 is a phosphoserine (serine 1126). Basic and acidic residues predominate over residues 1133-1142 (NEEKRRSALP).

This sequence belongs to the protein kinase superfamily. Ser/Thr protein kinase family. In terms of assembly, associates with the SNF1 kinase complex. Interacts with SNF1 and REG1. Post-translationally, autophosphorylated.

Its subcellular location is the cytoplasm. It catalyses the reaction L-seryl-[protein] + ATP = O-phospho-L-seryl-[protein] + ADP + H(+). It carries out the reaction L-threonyl-[protein] + ATP = O-phospho-L-threonyl-[protein] + ADP + H(+). Functionally, serine/threonine-protein kinase that phosphorylates SNF1, the catalytic subunit of the SNF1 kinase complex. Acts as an activator of the SNF1 kinase complex and controls its nuclear localization upon glucose and nitrogen depletion. Also required for SNF1 kinase activation under other stress conditions like alkaline pH or presence of cadmium. In Saccharomyces cerevisiae (strain ATCC 204508 / S288c) (Baker's yeast), this protein is SNF1-activating kinase 1 (SAK1).